A 138-amino-acid chain; its full sequence is RYQELTVLLLLLLEGGSWGASPLRPLCRPTNATLAAESDACPVCVTFTTTICAGYCPSMVRVLPAALPPSPQLVCTYRELSFSSIRLPGCPPGVDPIFSFPVALSCSCGSCRLSHSDCGGPRAQPHLCTRPHLSLRLL.

A signal peptide spans Arg1–Gly19. 6 disulfides stabilise this stretch: Cys27–Cys75, Cys41–Cys90, Cys44–Cys128, Cys52–Cys106, Cys56–Cys108, and Cys111–Cys118. N-linked (GlcNAc...) asparagine glycosylation is present at Asn31.

This sequence belongs to the glycoprotein hormones subunit beta family. In terms of assembly, heterodimer of a common alpha chain and a unique beta chain which confers biological specificity to thyrotropin, lutropin, follitropin and gonadotropin.

It localises to the secreted. Functionally, promotes spermatogenesis and ovulation by stimulating the testes and ovaries to synthesize steroids. The protein is Lutropin subunit beta (LHB) of Osphranter rufus (Red kangaroo).